The following is an 81-amino-acid chain: Short neurotoxin 1 (81 aa).

A signal peptide spans 1–21 (MKTLLLTLVVVTIVFLDLGYT). Cystine bridges form between cysteine 24–cysteine 43, cysteine 38–cysteine 60, cysteine 62–cysteine 73, and cysteine 74–cysteine 79.

This sequence belongs to the three-finger toxin family. Short-chain subfamily. Type I alpha-neurotoxin sub-subfamily. As to expression, expressed by the venom gland.

Its subcellular location is the secreted. Its function is as follows. Binds to muscle nicotinic acetylcholine receptor (nAChR) and inhibit acetylcholine from binding to the receptor, thereby impairing neuromuscular transmission. In Notechis scutatus scutatus (Mainland tiger snake), this protein is Short neurotoxin 1.